Here is a 458-residue protein sequence, read N- to C-terminus: RuvB-like helicase 1 (458 aa).

Positions 1–29 (MVQISEVKGNSRDNRTAAHTHIKGLGLRP) are disordered. 71–78 (GGPGTGKT) is a binding site for ATP.

This sequence belongs to the RuvB family. In terms of assembly, may form heterododecamers with RVB2. Component of the SWR1 chromatin remodeling complex, the INO80 chromatin remodeling complex, and of the R2TP complex.

The protein resides in the nucleus. It carries out the reaction ATP + H2O = ADP + phosphate + H(+). In terms of biological role, DNA helicase which participates in several chromatin remodeling complexes, including the SWR1 and the INO80 complexes. The SWR1 complex mediates the ATP-dependent exchange of histone H2A for the H2A variant HZT1 leading to transcriptional regulation of selected genes by chromatin remodeling. The INO80 complex remodels chromatin by shifting nucleosomes and is involved in DNA repair. Also involved in pre-rRNA processing. The chain is RuvB-like helicase 1 (rvb1) from Emericella nidulans (strain FGSC A4 / ATCC 38163 / CBS 112.46 / NRRL 194 / M139) (Aspergillus nidulans).